The primary structure comprises 113 residues: 2Fe-2S ferredoxin (113 aa).

Residues 2–104 (PKVIFLPNED…DLVVEIPKYN (103 aa)) enclose the 2Fe-2S ferredoxin-type domain. [2Fe-2S] cluster contacts are provided by Cys42, Cys48, Cys51, and Cys87.

This sequence belongs to the adrenodoxin/putidaredoxin family. It depends on [2Fe-2S] cluster as a cofactor.

Its function is as follows. Ferredoxin are iron-sulfur proteins that transfer electrons in a wide variety of metabolic reactions. In Haemophilus influenzae (strain ATCC 51907 / DSM 11121 / KW20 / Rd), this protein is 2Fe-2S ferredoxin (fdx).